A 373-amino-acid polypeptide reads, in one-letter code: RNA cytidine acetyltransferase (373 aa).

Arg-53 serves as a coordination point for ATP. Acetyl-CoA-binding positions include 216-218 (IAT) and 223-229 (TGMGYGS). Positions 246 to 271 (GEFEEENEAAKPADEESDDESNLLKE) are disordered. Arg-313 lines the acetyl-CoA pocket.

This sequence belongs to the RNA cytidine acetyltransferase family. NAT10 subfamily.

The protein localises to the nucleus. The protein resides in the nucleolus. The enzyme catalyses a cytidine in 18S rRNA + acetyl-CoA + ATP + H2O = an N(4)-acetylcytidine in 18S rRNA + ADP + phosphate + CoA + H(+). It carries out the reaction a cytidine in tRNA + acetyl-CoA + ATP + H2O = an N(4)-acetylcytidine in tRNA + ADP + phosphate + CoA + H(+). In terms of biological role, RNA cytidine acetyltransferase with specificity toward both 18S rRNA and tRNAs. Catalyzes the formation of N(4)-acetylcytidine (ac4C) in 18S rRNA. Required for early nucleolar cleavages of precursor rRNA at sites A0, A1 and A2 during 18S rRNA synthesis. Catalyzes the formation of ac4C in serine and leucine tRNAs. Requires a tRNA-binding adapter protein for full tRNA acetyltransferase activity but not for 18S rRNA acetylation. This Achlya ambisexualis (Water mold) protein is RNA cytidine acetyltransferase.